The primary structure comprises 512 residues: ATP synthase subunit alpha (512 aa).

ATP is bound at residue 170–177; that stretch reads GDRQTGKT.

It belongs to the ATPase alpha/beta chains family. In terms of assembly, F-type ATPases have 2 components, CF(1) - the catalytic core - and CF(0) - the membrane proton channel. CF(1) has five subunits: alpha(3), beta(3), gamma(1), delta(1), epsilon(1). CF(0) has three main subunits: a(1), b(2) and c(9-12). The alpha and beta chains form an alternating ring which encloses part of the gamma chain. CF(1) is attached to CF(0) by a central stalk formed by the gamma and epsilon chains, while a peripheral stalk is formed by the delta and b chains.

It localises to the cell inner membrane. The catalysed reaction is ATP + H2O + 4 H(+)(in) = ADP + phosphate + 5 H(+)(out). Its function is as follows. Produces ATP from ADP in the presence of a proton gradient across the membrane. The alpha chain is a regulatory subunit. In Solibacter usitatus (strain Ellin6076), this protein is ATP synthase subunit alpha.